The sequence spans 411 residues: Tyrosine--tRNA ligase (411 aa).

Position 34 (Y34) interacts with L-tyrosine. The 'HIGH' region signature appears at 39-48 (CTATSLHIGS). L-tyrosine is bound by residues Y171 and Q175. The short motif at 231-235 (KMGKT) is the 'KMSKS' region element. K234 contacts ATP. An S4 RNA-binding domain is found at 345 to 411 (ITAFELFHEA…GKKRHILVKI (67 aa)).

This sequence belongs to the class-I aminoacyl-tRNA synthetase family. TyrS type 1 subfamily. Homodimer.

The protein resides in the cytoplasm. The catalysed reaction is tRNA(Tyr) + L-tyrosine + ATP = L-tyrosyl-tRNA(Tyr) + AMP + diphosphate + H(+). In terms of biological role, catalyzes the attachment of tyrosine to tRNA(Tyr) in a two-step reaction: tyrosine is first activated by ATP to form Tyr-AMP and then transferred to the acceptor end of tRNA(Tyr). The polypeptide is Tyrosine--tRNA ligase (Rickettsia bellii (strain RML369-C)).